Reading from the N-terminus, the 548-residue chain is Terpene synthase 1 (548 aa).

The Mg(2+) site is built by aspartate 301, aspartate 305, aspartate 445, and glutamate 453. The short motif at 301–305 (DDTYD) is the DDXXD motif element.

It belongs to the terpene synthase family. Tpsa subfamily. Mg(2+) serves as cofactor. Mn(2+) is required as a cofactor.

It catalyses the reaction (2E,6E)-farnesyl diphosphate = (+)-valencene + diphosphate. The protein operates within secondary metabolite biosynthesis; terpenoid biosynthesis. In terms of biological role, sesquiterpene synthase involved in the biosynthesis of volatile compounds which contribute to fruit flavor and aroma. Mediates the conversion of (2E,6E)-farnesyl diphosphate (FPP) into (+)-valencene. No activity detected with geranyl diphosphate (GPP). This Citrus sinensis (Sweet orange) protein is Terpene synthase 1.